A 402-amino-acid chain; its full sequence is Bacteriochlorophyllide c C-7(1)-hydroxylase (402 aa).

The Radical SAM core domain maps to 104 to 359 (VIGMNQDIIN…IKYQDRFDMP (256 aa)). 3 residues coordinate [4Fe-4S] cluster: Cys-120, Cys-129, and Cys-132.

The protein belongs to the radical SAM superfamily. Requires [4Fe-4S] cluster as cofactor.

It carries out the reaction a bacteriochlorophyllide c + 2 S-adenosyl-L-methionine + H2O = a bacteriochlorophyllide e + 2 5'-deoxyadenosine + 2 L-methionine + 2 H(+). The catalysed reaction is a bacteriochlorophyllide d + 2 S-adenosyl-L-methionine + H2O = a bacteriochlorophyllide f + 2 5'-deoxyadenosine + 2 L-methionine + 2 H(+). Its pathway is porphyrin-containing compound metabolism; bacteriochlorophyll biosynthesis. In terms of biological role, involved in the biosynthesis of bacteriochlorophyll e (BChl e). Catalyzes two consecutive hydroxylation reactions of the C-7 methyl group of bacteriochlorophyllide c (BChlide c) to form a geminal diol intermediate that spontaneously dehydrates to produce the formyl group of bacteriochlorophyllide e (BChlide e). Also able to catalyze the same reaction for bacteriochlorophyllide d (BChlide d) to give rise to bacteriochlorophyllide f (BChlide f). This Chlorobaculum limnaeum protein is Bacteriochlorophyllide c C-7(1)-hydroxylase.